A 374-amino-acid chain; its full sequence is Peptide chain release factor 2 (374 aa).

At Q248 the chain carries N5-methylglutamine.

It belongs to the prokaryotic/mitochondrial release factor family. In terms of processing, methylated by PrmC. Methylation increases the termination efficiency of RF2.

The protein resides in the cytoplasm. Peptide chain release factor 2 directs the termination of translation in response to the peptide chain termination codons UGA and UAA. The chain is Peptide chain release factor 2 from Thermomicrobium roseum (strain ATCC 27502 / DSM 5159 / P-2).